Here is a 194-residue protein sequence, read N- to C-terminus: Peptidyl-tRNA hydrolase (194 aa).

Residue Tyr16 participates in tRNA binding. His21 serves as the catalytic Proton acceptor. 3 residues coordinate tRNA: Phe67, Asn69, and Asn115.

Belongs to the PTH family. In terms of assembly, monomer.

It localises to the cytoplasm. The enzyme catalyses an N-acyl-L-alpha-aminoacyl-tRNA + H2O = an N-acyl-L-amino acid + a tRNA + H(+). Its function is as follows. Hydrolyzes ribosome-free peptidyl-tRNAs (with 1 or more amino acids incorporated), which drop off the ribosome during protein synthesis, or as a result of ribosome stalling. In terms of biological role, catalyzes the release of premature peptidyl moieties from peptidyl-tRNA molecules trapped in stalled 50S ribosomal subunits, and thus maintains levels of free tRNAs and 50S ribosomes. The chain is Peptidyl-tRNA hydrolase from Sodalis glossinidius (strain morsitans).